Consider the following 586-residue polypeptide: Aspartate--tRNA(Asp/Asn) ligase (586 aa).

Residue Glu175 coordinates L-aspartate. The tract at residues 199 to 202 (QIFK) is aspartate. Arg221 is an L-aspartate binding site. Residues 221-223 (RDE) and Gln230 contribute to the ATP site. His448 contributes to the L-aspartate binding site. Residue Glu482 participates in ATP binding. Arg489 is an L-aspartate binding site. 534 to 537 (GVDR) is an ATP binding site.

Belongs to the class-II aminoacyl-tRNA synthetase family. Type 1 subfamily. As to quaternary structure, homodimer.

It localises to the cytoplasm. The enzyme catalyses tRNA(Asx) + L-aspartate + ATP = L-aspartyl-tRNA(Asx) + AMP + diphosphate. Aspartyl-tRNA synthetase with relaxed tRNA specificity since it is able to aspartylate not only its cognate tRNA(Asp) but also tRNA(Asn). Reaction proceeds in two steps: L-aspartate is first activated by ATP to form Asp-AMP and then transferred to the acceptor end of tRNA(Asp/Asn). This Syntrophomonas wolfei subsp. wolfei (strain DSM 2245B / Goettingen) protein is Aspartate--tRNA(Asp/Asn) ligase.